Consider the following 78-residue polypeptide: COP9 signalosome complex subunit 5b (78 aa).

It belongs to the peptidase M67A family. CSN5 subfamily. In terms of assembly, component of the CSN complex, probably composed of CSN1, CSN2, CSN3, CSN4, CSN5 (CSN5A or CSN5B), CSN6 (CSN6A or CSN6B), CSN7 and CSN8. Requires a divalent metal cation as cofactor.

The protein localises to the cytoplasm. It is found in the nucleus. In terms of biological role, probable protease subunit of the COP9 signalosome complex (CSN), a complex involved in various cellular and developmental processes such as photomorphogenesis and auxin and jasmonate responses. The CSN complex is an essential regulator of the ubiquitin (Ubl) conjugation pathway by mediating the deneddylation of the cullin subunits of the SCF-type E3 ligase complexes, leading to decrease the Ubl ligase activity of SCF. In the complex, it probably acts as the catalytic center that mediates the cleavage of Nedd8 from cullins. It however has no metalloprotease activity by itself and requires the other subunits of the CSN complex. The CSN complex is involved in repression of photomorphogenesis in darkness by regulating the activity of COP1-containing Ubl ligase complexes. The polypeptide is COP9 signalosome complex subunit 5b (CSN5B) (Brassica oleracea (Wild cabbage)).